The sequence spans 178 residues: NADH-quinone oxidoreductase subunit B (178 aa).

Cys45, Cys46, Cys111, and Cys140 together coordinate [4Fe-4S] cluster.

It belongs to the complex I 20 kDa subunit family. NDH-1 is composed of 15 different subunits. Subunits NuoB, C, D, E, F, and G constitute the peripheral sector of the complex. Requires [4Fe-4S] cluster as cofactor.

The protein localises to the cell membrane. It carries out the reaction a quinone + NADH + 5 H(+)(in) = a quinol + NAD(+) + 4 H(+)(out). NDH-1 shuttles electrons from NADH, via FMN and iron-sulfur (Fe-S) centers, to quinones in the respiratory chain. The immediate electron acceptor for the enzyme in this species is believed to be a menaquinone. Couples the redox reaction to proton translocation (for every two electrons transferred, four hydrogen ions are translocated across the cytoplasmic membrane), and thus conserves the redox energy in a proton gradient. This chain is NADH-quinone oxidoreductase subunit B, found in Deinococcus deserti (strain DSM 17065 / CIP 109153 / LMG 22923 / VCD115).